Here is a 290-residue protein sequence, read N- to C-terminus: Pyridoxal kinase PdxY (290 aa).

Substrate contacts are provided by residues serine 12 and 47 to 48 (TQ). Residues aspartate 114, glutamate 151, lysine 184, and 211–214 (RPLL) each bind ATP. A substrate-binding site is contributed by aspartate 225.

This sequence belongs to the pyridoxine kinase family. PdxY subfamily. As to quaternary structure, homodimer. Mg(2+) is required as a cofactor.

It carries out the reaction pyridoxal + ATP = pyridoxal 5'-phosphate + ADP + H(+). It functions in the pathway cofactor metabolism; pyridoxal 5'-phosphate salvage; pyridoxal 5'-phosphate from pyridoxal: step 1/1. Functionally, pyridoxal kinase involved in the salvage pathway of pyridoxal 5'-phosphate (PLP). Catalyzes the phosphorylation of pyridoxal to PLP. In Pseudomonas putida (strain ATCC 47054 / DSM 6125 / CFBP 8728 / NCIMB 11950 / KT2440), this protein is Pyridoxal kinase PdxY.